The following is a 540-amino-acid chain: Early growth response protein 1 (540 aa).

2 disordered regions span residues M1–F105 and V162–P240. Positions S64–S75 are enriched in gly residues. Low complexity predominate over residues P167–S190. The segment covering A192–I201 has biased composition (polar residues). A Glycyl lysine isopeptide (Lys-Gly) (interchain with G-Cter in SUMO2) cross-link involves residue K304. Residues P317–Y337 are disordered. A C2H2-type 1 zinc finger spans residues Y337 to H361. The C2H2-type 2; degenerate zinc-finger motif lies at P366 to H388. The C2H2-type 3 zinc-finger motif lies at F394–H416. The interval D407–P482 is disordered. Over residues R411–D421 the composition is skewed to basic residues. Positions S427–P482 are enriched in low complexity.

It belongs to the EGR C2H2-type zinc-finger protein family. Interacts with SNAI1 and SP1 upon 12-O-tetradecanoylphorbol-13-acetate (TPA) induction.

The protein resides in the nucleus. The protein localises to the cytoplasm. Functionally, transcriptional regulator. Recognizes and binds to the DNA sequence 5'-GCG(T/G)GGGCG-3'(EGR-site) in the promoter region of target genes. Binds double-stranded target DNA, irrespective of the cytosine methylation status. Regulates the transcription of numerous target genes, and thereby plays an important role in regulating the response to growth factors, DNA damage, and ischemia. Plays a role in the regulation of cell survival, proliferation and cell death. Activates expression of p53/TP53 and TGFB1, and thereby helps prevent tumor formation. Required for normal progress through mitosis and normal proliferation of hepatocytes after partial hepatectomy. Mediates responses to ischemia and hypoxia; regulates the expression of proteins such as IL1B and CXCL2 that are involved in inflammatory processes and development of tissue damage after ischemia. Regulates biosynthesis of luteinizing hormone (LHB) in the pituitary. Regulates the amplitude of the expression rhythms of clock genes: BMAL1, PER2 and NR1D1 in the liver via the activation of PER1 (clock repressor) transcription. Regulates the rhythmic expression of core-clock gene BMAL1 in the suprachiasmatic nucleus (SCN). This is Early growth response protein 1 (EGR1) from Bos taurus (Bovine).